The chain runs to 104 residues: Large ribosomal subunit protein uL24 (104 aa).

Belongs to the universal ribosomal protein uL24 family. Part of the 50S ribosomal subunit.

Functionally, one of two assembly initiator proteins, it binds directly to the 5'-end of the 23S rRNA, where it nucleates assembly of the 50S subunit. Its function is as follows. One of the proteins that surrounds the polypeptide exit tunnel on the outside of the subunit. This Shewanella halifaxensis (strain HAW-EB4) protein is Large ribosomal subunit protein uL24.